A 358-amino-acid chain; its full sequence is MSKGLPETRTDAAMSELVPEPRPKPAVPMKPMSINSNLLGYIGIDTIIEQMRKKTMKTGFDFNIMVVGQSGLGKSTLVNTLFKSQVSRKASSWNREEKIPKTVEIKAIGHVIEEGGVKMKLTVIDTPGFGDQINNENCWEPIEKYINEQYEKFLKEEVNIARKKRIPDTRVHCCLYFISPTGHSLRPLDLEFMKHLSKVVNIIPVIAKADTMTLEEKSEFKQRVRKELEVNGIEFYPQKEFDEDLEDKTENDKIRQESMPFAVVGSDKEYQVNGKRVLGRKTPWGIIEVENLNHCEFALLRDFVIRTHLQDLKEVTHNIHYETYRAKRLNDNGGLPPGEGLLGTVLPPVPATPCPTAE.

Basic and acidic residues predominate over residues 1–10 (MSKGLPETRT). The interval 1–30 (MSKGLPETRTDAAMSELVPEPRPKPAVPMK) is disordered. In terms of domain architecture, Septin-type G spans 58-331 (TGFDFNIMVV…ETYRAKRLND (274 aa)). The G1 motif stretch occupies residues 68 to 75 (GQSGLGKS). A GTP-binding site is contributed by 68–75 (GQSGLGKS). At Ser-91 the chain carries Phosphoserine. Thr-102 contributes to the GTP binding site. Residues 125–128 (DTPG) are G3 motif. The interval 207–210 (AKAD) is G4 motif. GTP is bound by residues 208–216 (KADTMTLEE), Gly-265, and Arg-280.

Belongs to the TRAFAC class TrmE-Era-EngA-EngB-Septin-like GTPase superfamily. Septin GTPase family. Septins polymerize into heterooligomeric protein complexes that form filaments, and can associate with cellular membranes, actin filaments and microtubules. GTPase activity is required for filament formation. Post-translationally, phosphorylated by PKG on serine residues. Phosphorylated by PKG on Ser-91. In terms of tissue distribution, brain-specific.

It localises to the cytoplasm. The protein resides in the cytoskeleton. Its subcellular location is the synapse. Its function is as follows. Filament-forming cytoskeletal GTPase. May play a role in cytokinesis (Potential). In Homo sapiens (Human), this protein is Neuronal-specific septin-3.